A 176-amino-acid polypeptide reads, in one-letter code: Ribosome maturation factor RimM (176 aa).

Positions 97–176 (EDEFYWRDLI…QITVDWDPDF (80 aa)) constitute a PRC barrel domain.

This sequence belongs to the RimM family. In terms of assembly, binds ribosomal protein uS19.

The protein resides in the cytoplasm. An accessory protein needed during the final step in the assembly of 30S ribosomal subunit, possibly for assembly of the head region. Essential for efficient processing of 16S rRNA. May be needed both before and after RbfA during the maturation of 16S rRNA. It has affinity for free ribosomal 30S subunits but not for 70S ribosomes. The protein is Ribosome maturation factor RimM of Shewanella sediminis (strain HAW-EB3).